The primary structure comprises 120 residues: NAD(P)H-quinone oxidoreductase subunit 3, chloroplastic (120 aa).

3 helical membrane-spanning segments follow: residues Ile9–Gly29, Met64–Met84, and Val88–Leu108.

The protein belongs to the complex I subunit 3 family. NDH is composed of at least 16 different subunits, 5 of which are encoded in the nucleus.

It localises to the plastid. The protein resides in the chloroplast thylakoid membrane. The enzyme catalyses a plastoquinone + NADH + (n+1) H(+)(in) = a plastoquinol + NAD(+) + n H(+)(out). It carries out the reaction a plastoquinone + NADPH + (n+1) H(+)(in) = a plastoquinol + NADP(+) + n H(+)(out). NDH shuttles electrons from NAD(P)H:plastoquinone, via FMN and iron-sulfur (Fe-S) centers, to quinones in the photosynthetic chain and possibly in a chloroplast respiratory chain. The immediate electron acceptor for the enzyme in this species is believed to be plastoquinone. Couples the redox reaction to proton translocation, and thus conserves the redox energy in a proton gradient. This Aethionema grandiflorum (Persian stone-cress) protein is NAD(P)H-quinone oxidoreductase subunit 3, chloroplastic.